A 172-amino-acid chain; its full sequence is Crossover junction endodeoxyribonuclease RuvC (172 aa).

Active-site residues include Asp-11, Glu-70, and Asp-142. Mg(2+) is bound by residues Asp-11, Glu-70, and Asp-142.

This sequence belongs to the RuvC family. In terms of assembly, homodimer which binds Holliday junction (HJ) DNA. The HJ becomes 2-fold symmetrical on binding to RuvC with unstacked arms; it has a different conformation from HJ DNA in complex with RuvA. In the full resolvosome a probable DNA-RuvA(4)-RuvB(12)-RuvC(2) complex forms which resolves the HJ. The cofactor is Mg(2+).

The protein localises to the cytoplasm. The enzyme catalyses Endonucleolytic cleavage at a junction such as a reciprocal single-stranded crossover between two homologous DNA duplexes (Holliday junction).. Its function is as follows. The RuvA-RuvB-RuvC complex processes Holliday junction (HJ) DNA during genetic recombination and DNA repair. Endonuclease that resolves HJ intermediates. Cleaves cruciform DNA by making single-stranded nicks across the HJ at symmetrical positions within the homologous arms, yielding a 5'-phosphate and a 3'-hydroxyl group; requires a central core of homology in the junction. The consensus cleavage sequence is 5'-(A/T)TT(C/G)-3'. Cleavage occurs on the 3'-side of the TT dinucleotide at the point of strand exchange. HJ branch migration catalyzed by RuvA-RuvB allows RuvC to scan DNA until it finds its consensus sequence, where it cleaves and resolves the cruciform DNA. In Hydrogenovibrio crunogenus (strain DSM 25203 / XCL-2) (Thiomicrospira crunogena), this protein is Crossover junction endodeoxyribonuclease RuvC.